The primary structure comprises 596 residues: V-type ATP synthase alpha chain (596 aa).

233 to 240 is a binding site for ATP; that stretch reads GPFGAGKT.

Belongs to the ATPase alpha/beta chains family.

The enzyme catalyses ATP + H2O + 4 H(+)(in) = ADP + phosphate + 5 H(+)(out). Functionally, produces ATP from ADP in the presence of a proton gradient across the membrane. The V-type alpha chain is a catalytic subunit. This is V-type ATP synthase alpha chain from Streptococcus gordonii (strain Challis / ATCC 35105 / BCRC 15272 / CH1 / DL1 / V288).